A 299-amino-acid chain; its full sequence is MEPINAAIVGPGNIGTDLLAKLERVDSIAVQYVVGVVESDGLERARAKGISASAGGVDWLLEQDPLPEIVFEATSAKAHQLNAPRYHELNIQAVDLTPAHIGPMVCPPVNLTHHIDAPNVSMITCGGQATIPMVHAVSRVSAVPYAEIVASVASRGAGPGTRANIDEFTQTTGQAVSEVGGAARGRAIIILNPMEPPMIMRDTVYCMIDADADRDAISESVHRMVTEVQAYVPGYRLRADPQFDDPKDGWDGHGRVAIFLEVEGNGDYLPKYAGNLDIMTAAAARVGDSIARNRMGVPA.

The active-site Acyl-thioester intermediate is Cys-125. Residues 156-164 (GAGPGTRAN) and Asn-275 each bind NAD(+).

Belongs to the acetaldehyde dehydrogenase family.

The catalysed reaction is acetaldehyde + NAD(+) + CoA = acetyl-CoA + NADH + H(+). The sequence is that of Acetaldehyde dehydrogenase 6 (hpdG) from Rhodococcus jostii (strain RHA1).